The chain runs to 269 residues: Proline-rich protein 7 (269 aa).

Topologically, residues Met-1–Thr-9 are extracellular. A required for interaction with NMDA receptors region spans residues Met-1 to Glu-44. The tract at residues Val-2–Lys-39 is required for membrane localization. Residues Phe-10 to Phe-30 traverse the membrane as a helical; Signal-anchor for type III membrane protein segment. The Cytoplasmic segment spans residues Cys-31–Val-269. The residue at position 64 (Ser-64) is a Phosphoserine. Disordered regions lie at residues Ser-64–Leu-83 and Leu-98–Pro-128. Residues Ala-108–Leu-117 show a composition bias toward basic residues. The segment covering Pro-118–Pro-128 has biased composition (pro residues). A required for internalization region spans residues Pro-146 to Thr-166. Residues Pro-146–Val-269 are required for apoptosis induction. Residues Thr-267 to Val-269 carry the PDZ-binding motif.

As to quaternary structure, forms a complex with NMDA receptor zeta subunit GRIN1 and epsilon subunit GRIN2B. Interacts with GRIN2B. Interacts with GRIN1; the interaction is reduced upon NMDA receptor activity. Found in a postsynaptic membrane complex with DLG4 and GRIN1. Interacts with DLG4 (via PDZ3 domain and to lesser degree via PDZ2 domain). Interacts with FBXW7. Found in a complex with JUN and FBXW7. Interacts with JUN and FBXW7; the interaction inhibits ubiquitination-mediated JUN degradation promoting its phosphorylation and transcriptional activity. Interacts with SRC. In terms of processing, palmitoylated. Tyrosine phosphorylated, possibly by SRC. As to expression, expressed in brain. Expressed in the cerebral cortex and especially in hippocampal neural cells (at protein level).

It is found in the cell membrane. The protein resides in the postsynaptic cell membrane. It localises to the postsynaptic density membrane. Its subcellular location is the cytoplasm. The protein localises to the perinuclear region. It is found in the synapse. The protein resides in the cell projection. It localises to the dendrite. Its subcellular location is the nucleus. Functionally, acts as a synapse-to-nucleus messenger to promote NMDA receptor-mediated excitotoxicity in neurons in a JUN-dependent manner. Inhibits ubiquitination-mediated degradation and promotes phosphorylation and transcriptional activity of transcription factor JUN. Might play a redundant role in the regulation of T cell receptor signaling. Might promote apoptosis in T cells. The protein is Proline-rich protein 7 (Prr7) of Rattus norvegicus (Rat).